Consider the following 58-residue polypeptide: UPF0337 protein CE1672 (58 aa).

Basic and acidic residues predominate over residues 1–39 (MGLGDKIRNTAEKASGKVKEATGKATDNEKLEAEGKTDQ). Residues 1-58 (MGLGDKIRNTAEKASGKVKEATGKATDNEKLEAEGKTDQFKGNAKNTVENAKDTLRGN) form a disordered region.

The protein belongs to the UPF0337 (CsbD) family.

This is UPF0337 protein CE1672 from Corynebacterium efficiens (strain DSM 44549 / YS-314 / AJ 12310 / JCM 11189 / NBRC 100395).